Reading from the N-terminus, the 900-residue chain is Alanine--tRNA ligase (900 aa).

Positions 604, 608, 708, and 712 each coordinate Zn(2+).

It belongs to the class-II aminoacyl-tRNA synthetase family. It depends on Zn(2+) as a cofactor.

The protein localises to the cytoplasm. The catalysed reaction is tRNA(Ala) + L-alanine + ATP = L-alanyl-tRNA(Ala) + AMP + diphosphate. Functionally, catalyzes the attachment of alanine to tRNA(Ala) in a two-step reaction: alanine is first activated by ATP to form Ala-AMP and then transferred to the acceptor end of tRNA(Ala). Also edits incorrectly charged Ser-tRNA(Ala) and Gly-tRNA(Ala) via its editing domain. This is Alanine--tRNA ligase from Saccharolobus islandicus (strain M.14.25 / Kamchatka #1) (Sulfolobus islandicus).